We begin with the raw amino-acid sequence, 271 residues long: Putative pyruvate, phosphate dikinase regulatory protein (271 aa).

150–157 (GVSRTSKT) is a binding site for ADP.

It belongs to the pyruvate, phosphate/water dikinase regulatory protein family. PDRP subfamily.

It catalyses the reaction N(tele)-phospho-L-histidyl/L-threonyl-[pyruvate, phosphate dikinase] + ADP = N(tele)-phospho-L-histidyl/O-phospho-L-threonyl-[pyruvate, phosphate dikinase] + AMP + H(+). It carries out the reaction N(tele)-phospho-L-histidyl/O-phospho-L-threonyl-[pyruvate, phosphate dikinase] + phosphate + H(+) = N(tele)-phospho-L-histidyl/L-threonyl-[pyruvate, phosphate dikinase] + diphosphate. Bifunctional serine/threonine kinase and phosphorylase involved in the regulation of the pyruvate, phosphate dikinase (PPDK) by catalyzing its phosphorylation/dephosphorylation. The sequence is that of Putative pyruvate, phosphate dikinase regulatory protein from Oceanobacillus iheyensis (strain DSM 14371 / CIP 107618 / JCM 11309 / KCTC 3954 / HTE831).